Consider the following 248-residue polypeptide: Granzyme B (248 aa).

Residues 1–18 form the signal peptide; that stretch reads MKLLLLLLSFSLAPKTEA. A propeptide spans 19-20 (activation peptide); that stretch reads GE. Residues 21–246 form the Peptidase S1 domain; sequence IIGGHEAKPH…FLSWIKKTMK (226 aa). Cys-50 and Cys-66 are disulfide-bonded. Residues His-65 and Asp-109 each act as charge relay system in the active site. Disulfide bonds link Cys-143–Cys-210 and Cys-174–Cys-189. The Charge relay system role is filled by Ser-204.

The protein belongs to the peptidase S1 family. Granzyme subfamily.

The protein localises to the secreted. It is found in the cytolytic granule. The catalysed reaction is Preferential cleavage: -Asp-|-Xaa- &gt;&gt; -Asn-|-Xaa- &gt; -Met-|-Xaa-, -Ser-|-Xaa-.. With respect to regulation, inactivated by the serine protease inhibitor diisopropylfluorophosphate. In terms of biological role, abundant protease in the cytosolic granules of cytotoxic T-cells and NK-cells which activates caspase-independent pyroptosis when delivered into the target cell through the immunological synapse. It cleaves after Asp. Once delivered into the target cell, acts by catalyzing cleavage of gasdermin-E (GSDME), releasing the pore-forming moiety of GSDME, thereby triggering pyroptosis and target cell death. Seems to be linked to an activation cascade of caspases (aspartate-specific cysteine proteases) responsible for apoptosis execution. Cleaves caspase-3 and -9 (CASP3 and CASP9, respectively) to give rise to active enzymes mediating apoptosis. Cleaves and activates CASP7 in response to bacterial infection, promoting plasma membrane repair. The chain is Granzyme B (Gzmb) from Rattus norvegicus (Rat).